The chain runs to 197 residues: TM2 domain-containing protein 1 (197 aa).

The first 32 residues, 1–32 (MAFRWRSLMRFRSTTRLLLLFTFCLTVIHSLG), serve as a signal peptide directing secretion. Over 33-105 (NDVDSCDKLH…GFNKTIPCRN (73 aa)) the chain is Extracellular. N-linked (GlcNAc...) asparagine glycans are attached at residues Asn77, Asn84, Asn98, and Asn105. The helical transmembrane segment at 106–126 (VSGYSYKVAVALSLFLGWIGA) threads the bilayer. A TM2 domain is found at 108–155 (GYSYKVAVALSLFLGWIGADRFYLGYPALGLLKFCTVGFCGIGSLVDF). At 127–143 (DRFYLGYPALGLLKFCT) the chain is on the cytoplasmic side. A helical transmembrane segment spans residues 144–164 (VGFCGIGSLVDFMLISMQIVG). The Extracellular portion of the chain corresponds to 165–197 (PSDGSDYIVDYYGARLTRLSITNETYRRMQPSP). An N-linked (GlcNAc...) asparagine glycan is attached at Asn187.

This sequence belongs to the TM2 family.

The protein localises to the membrane. In Danio rerio (Zebrafish), this protein is TM2 domain-containing protein 1 (tm2d1).